The primary structure comprises 1297 residues: Protein Atossa (1297 aa).

2 disordered regions span residues 1–22 (MIPTSVTNSPPPAGLGQNGASA) and 117–149 (TNPYGSMGGSENRAVNGSGSTGSPSSSSLTHQR). A compositionally biased stretch (low complexity) spans 133-144 (GSGSTGSPSSSS). The tract at residues 174 to 182 (VSLAINDLN) is transactivation domain 1 (TAD1). Disordered stretches follow at residues 206 to 227 (SSAGGGTNNSSAASSPGSNSSD), 287 to 311 (TPTTTATATASSGASSSASRPKHGP), 518 to 655 (GLPH…ETQS), 704 to 741 (SNGTANGSTNGATDDGDDSDTTASEMEETSSCSLSSAD), and 1017 to 1048 (AAHKRRSRHLSDRSDRSSLGSDEQLSDEDLES). Low complexity-rich tracts occupy residues 213–226 (NNSSAASSPGSNSS) and 287–305 (TPTTTATATASSGASSSAS). The segment covering 564–578 (SALTPTTTAGGSNCD) has biased composition (polar residues). Basic residues predominate over residues 605–620 (QKYRKRMQRRDKKRER). Low complexity-rich tracts occupy residues 643 to 655 (SQTQSQTTSETQS) and 706 to 716 (GTANGSTNGAT). Residues 717-731 (DDGDDSDTTASEMEE) are compositionally biased toward acidic residues. Residues 1074 to 1132 (LLGNLEESLLQRRLMPKIEVMGFTLQLGASGGFCPTQVNIPAVSYFYELHGETLSTPYL) are required for macropage invasion. The interval 1150 to 1158 (VQATLLNPI) is transactivation domain 2 (TAD2). The disordered stretch occupies residues 1192–1213 (SQDQDEGHKVPRSPTVTSTTSK). Over residues 1203-1212 (RSPTVTSTTS) the composition is skewed to low complexity.

This sequence belongs to the ATOS family. In terms of tissue distribution, expressed in macrophages.

Its subcellular location is the nucleus. In terms of biological role, transcription regulator that synchronizes transcriptional and translational programs to promote macrophage invasion of tissues. Required in macrophages for their early invasion into the extended germband. Induces transcriptional expression of metabolic enzymes as well as of the translational regulator pths/DDX47. With pths/DDX47, adjusts transcription and translation of a subset of OXPHOS genes to increase mitochondrial bioenergetics and allow macrophage tissue invasion. The chain is Protein Atossa from Drosophila melanogaster (Fruit fly).